The chain runs to 1195 residues: DNA-directed RNA polymerase subunit Rpo2 (1195 aa).

Over residues 894 to 909 (LEEGEERLGPQRRRES) the composition is skewed to basic and acidic residues. A disordered region spans residues 894–914 (LEEGEERLGPQRRRESSVTMR). Cys-1135, Cys-1140, Cys-1155, and Cys-1158 together coordinate Zn(2+).

It belongs to the RNA polymerase beta chain family. As to quaternary structure, part of the RNA polymerase complex. Requires Zn(2+) as cofactor.

Its subcellular location is the cytoplasm. It catalyses the reaction RNA(n) + a ribonucleoside 5'-triphosphate = RNA(n+1) + diphosphate. Its function is as follows. DNA-dependent RNA polymerase (RNAP) catalyzes the transcription of DNA into RNA using the four ribonucleoside triphosphates as substrates. This subunit is involved in DNA promoter recognition. The polypeptide is DNA-directed RNA polymerase subunit Rpo2 (Thermoplasma acidophilum (strain ATCC 25905 / DSM 1728 / JCM 9062 / NBRC 15155 / AMRC-C165)).